A 455-amino-acid chain; its full sequence is Transcription factor mokH (455 aa).

Residues 1–22 (MALSPVQDPPSHTDKTMPRRAF) are disordered. The zn(2)-C6 fungal-type DNA-binding region spans 26-58 (CDRCHAQKIKCIGSEGAVARASCQRCQQAGLRC). Disordered regions lie at residues 68-113 (KLPK…DSSG) and 296-317 (LTPL…RSSV). The span at 75-88 (AESSPASSTAGLHT) shows a compositional bias: polar residues. Residues 89-113 (SSSDSSPPVPSDGLPLDLPGPDSSG) show a composition bias toward low complexity.

The protein resides in the nucleus. In terms of biological role, transcription factor that regulates the gene cluster that mediates the biosynthesis of monakolin K, also known as lovastatin, and which acts as a potent competitive inhibitor of HMG-CoA reductase. Monakolin K biosynthesis is performed in two stages. The first stage is catalyzed by the nonaketide synthase mokA, which belongs to type I polyketide synthases and catalyzes the iterative nine-step formation of the polyketide. This PKS stage is completed by the action of dehydrogenase mokE, which catalyzes the NADPH-dependent reduction of the unsaturated tetra-, penta- and heptaketide intermediates that arise during the mokA-mediated biosynthesis of the nonaketide chain and leads to dihydromonacolin L. Covalently bound dihydromonacolin L is released from mokA by the mokD esterase. Conversion of dihydromonacolin L into monacolin L and then monacolin J is subsequently performed with the participation of molecular oxygen and P450 monoogygenase mokC. Finally, mokF performs the conversion of monacoline J to monacoline K through the addition of the side-chain diketide moiety (2R)-2-methylbutanoate produced by the diketide synthase mokB. HMG-CoA reductase mokG may act as a down-regulator of monacolin K production. This Monascus pilosus (Red mold) protein is Transcription factor mokH.